A 333-amino-acid polypeptide reads, in one-letter code: Ribose-phosphate pyrophosphokinase (333 aa).

58–60 (DGE) provides a ligand contact to ATP. His151 and Asp190 together coordinate Mg(2+). Lys214 is a catalytic residue. D-ribose 5-phosphate-binding positions include Arg216, Asp240, and 244–248 (DTAGT).

This sequence belongs to the ribose-phosphate pyrophosphokinase family. Class I subfamily. As to quaternary structure, homohexamer. Requires Mg(2+) as cofactor.

It is found in the cytoplasm. The catalysed reaction is D-ribose 5-phosphate + ATP = 5-phospho-alpha-D-ribose 1-diphosphate + AMP + H(+). It functions in the pathway metabolic intermediate biosynthesis; 5-phospho-alpha-D-ribose 1-diphosphate biosynthesis; 5-phospho-alpha-D-ribose 1-diphosphate from D-ribose 5-phosphate (route I): step 1/1. Its function is as follows. Involved in the biosynthesis of the central metabolite phospho-alpha-D-ribosyl-1-pyrophosphate (PRPP) via the transfer of pyrophosphoryl group from ATP to 1-hydroxyl of ribose-5-phosphate (Rib-5-P). This Synechocystis sp. (strain ATCC 27184 / PCC 6803 / Kazusa) protein is Ribose-phosphate pyrophosphokinase.